Reading from the N-terminus, the 342-residue chain is uncharacterized protein (342 aa).

R69 contributes to the substrate binding site. H176 (proton donor) is an active-site residue. D240 serves as a coordination point for substrate.

The protein belongs to the aldose epimerase family.

This is an uncharacterized protein from Saccharomyces cerevisiae (strain ATCC 204508 / S288c) (Baker's yeast).